The primary structure comprises 149 residues: Large ribosomal subunit protein uL13 (149 aa).

Belongs to the universal ribosomal protein uL13 family. Part of the 50S ribosomal subunit.

This protein is one of the early assembly proteins of the 50S ribosomal subunit, although it is not seen to bind rRNA by itself. It is important during the early stages of 50S assembly. This Prosthecochloris aestuarii (strain DSM 271 / SK 413) protein is Large ribosomal subunit protein uL13.